The sequence spans 3059 residues: Genome polyprotein (3059 aa).

A Peptidase S30 domain is found at 154–298 (GVTPYSVQQL…ESTMLSTHHY (145 aa)). Residues histidine 207, aspartate 216, and serine 249 each act as for P1 proteinase activity in the active site. The short motif at 349–352 (KITC) is the Involved in interaction with stylet and aphid transmission element. The Involved in virions binding and aphid transmission motif lies at 607–609 (PTK). Residues 633 to 755 (MYIAKSGYCY…DSEMKHYRVG (123 aa)) enclose the Peptidase C6 domain. Catalysis depends on for helper component proteinase activity residues cysteine 641 and histidine 714. The 153-residue stretch at 1226–1378 (QIAHDLHTDI…TQYPVEIRVE (153 aa)) folds into the Helicase ATP-binding domain. 1239 to 1246 (GAVGSGKS) is an ATP binding site. The short motif at 1328–1331 (DEFH) is the DEFH box element. The 160-residue stretch at 1397 to 1556 (DLTSKCDNLL…GLPISTQSVT (160 aa)) folds into the Helicase C-terminal domain. Residues 1883–1890 (KKGKTKGK) carry the Nuclear localization signal motif. An O-(5'-phospho-RNA)-tyrosine modification is found at tyrosine 1905. In terms of domain architecture, Peptidase C4 spans 2032–2250 (STSMFRGVRD…VCWGSFHLQD (219 aa)). Active-site for nuclear inclusion protein A activity residues include histidine 2077, aspartate 2112, and cysteine 2182. The region spanning 2516 to 2640 (WVYCDADGSQ…AIRPDMEHKL (125 aa)) is the RdRp catalytic domain. Phosphothreonine is present on threonine 3042.

The protein belongs to the potyviridae genome polyprotein family. In terms of assembly, interacts with host eIF4E protein (via cap-binding region); this interaction mediates the translation of the VPg-viral RNA conjugates. Part of a complex that comprises VPg, RNA, host EIF4E and EIF4G; this interaction mediates the translation of the VPg-viral RNA conjugates. Post-translationally, VPg is uridylylated by the polymerase and is covalently attached to the 5'-end of the genomic RNA. This uridylylated form acts as a nucleotide-peptide primer for the polymerase. In terms of processing, phosphorylation inhibits the RNA-binding capacity of the capsid protein. Potyviral RNA is expressed as two polyproteins which undergo post-translational proteolytic processing. Genome polyprotein is processed by NIa-pro, P1 and HC-pro proteinases resulting in the production of at least ten individual proteins. P3N-PIPO polyprotein is cleaved by P1 and HC-pro proteinases resulting in the production of three individual proteins. The P1 proteinase and the HC-pro cleave only their respective C-termini autocatalytically. 6K1 is essential for proper proteolytic separation of P3 from CI.

It is found in the host cytoplasmic vesicle. Its subcellular location is the host nucleus. It localises to the virion. It catalyses the reaction RNA(n) + a ribonucleoside 5'-triphosphate = RNA(n+1) + diphosphate. It carries out the reaction Hydrolyzes glutaminyl bonds, and activity is further restricted by preferences for the amino acids in P6 - P1' that vary with the species of potyvirus, e.g. Glu-Xaa-Xaa-Tyr-Xaa-Gln-|-(Ser or Gly) for the enzyme from tobacco etch virus. The natural substrate is the viral polyprotein, but other proteins and oligopeptides containing the appropriate consensus sequence are also cleaved.. The enzyme catalyses Hydrolyzes a Gly-|-Gly bond at its own C-terminus, commonly in the sequence -Tyr-Xaa-Val-Gly-|-Gly, in the processing of the potyviral polyprotein.. Functionally, required for aphid transmission and also has proteolytic activity. Only cleaves a Gly-Gly dipeptide at its own C-terminus. Interacts with virions and aphid stylets. Acts as a suppressor of RNA-mediated gene silencing, also known as post-transcriptional gene silencing (PTGS), a mechanism of plant viral defense that limits the accumulation of viral RNAs. May have RNA-binding activity. Its function is as follows. Has helicase activity. It may be involved in replication. In terms of biological role, indispensable for virus replication. Reduces the abundance of host transcripts related to jasmonic acid biosynthesis therefore altering the host defenses. In order to increase its own stability, decreases host protein degradation pathways. Indispensable for virus replication. Functionally, mediates the cap-independent, EIF4E-dependent translation of viral genomic RNAs. Binds to the cap-binding site of host EIF4E and thus interferes with the host EIF4E-dependent mRNA export and translation. VPg-RNA directly binds EIF4E and is a template for transcription. Also forms trimeric complexes with EIF4E-EIF4G, which are templates for translation. Its function is as follows. Has RNA-binding and proteolytic activities. In terms of biological role, an RNA-dependent RNA polymerase that plays an essential role in the virus replication. Involved in aphid transmission, cell-to-cell and systemis movement, encapsidation of the viral RNA and in the regulation of viral RNA amplification. The protein is Genome polyprotein of Potato virus A (PVA).